Reading from the N-terminus, the 510-residue chain is Ribonuclease Y (510 aa).

Residues 2 to 22 (IYIIFSSIFAGFILGFLVRVF) traverse the membrane as a helical segment. The 61-residue stretch at 198 to 258 (TVASVELPND…IRKELAKRTL (61 aa)) folds into the KH domain. Residues 324-419 (VLSHSKETAI…VQIADAISAS (96 aa)) enclose the HD domain.

This sequence belongs to the RNase Y family.

The protein resides in the cell membrane. Functionally, endoribonuclease that initiates mRNA decay. This Borreliella burgdorferi (strain ATCC 35210 / DSM 4680 / CIP 102532 / B31) (Borrelia burgdorferi) protein is Ribonuclease Y.